The following is a 106-amino-acid chain: UPF0060 membrane protein CHU_3331 (106 aa).

4 consecutive transmembrane segments (helical) span residues 5-25 (FYFILAAFCEISGCYLFWLHF), 31-51 (ALLLLPAAACLLVFAYLLTKI), 59-79 (AYAVYGGIYIVCSLAWMYGIE), and 85-105 (IWDYIGVGICLIGASVILFAP).

This sequence belongs to the UPF0060 family.

It localises to the cell inner membrane. The sequence is that of UPF0060 membrane protein CHU_3331 from Cytophaga hutchinsonii (strain ATCC 33406 / DSM 1761 / CIP 103989 / NBRC 15051 / NCIMB 9469 / D465).